We begin with the raw amino-acid sequence, 1503 residues long: Mitogen-activated protein kinase-binding protein 1 (1503 aa).

WD repeat units lie at residues 89–130, 133–174, 176–214, 271–310, 337–376, 382–431, 472–511, 514–556, 560–601, 609–648, 654–693, and 696–735; these read SSRK…QVAE, EHKY…VVAS, KVSS…TSKV, VELR…FLST, ARYP…KVGK, YHSS…VHGS, DPRV…EMLK, AHDS…SLQQ, EHSS…EGVQ, VRKT…QKKL, GEDG…CVAT, and GHSE…TISM. Disordered regions lie at residues 745–817, 874–917, and 951–1176; these read RQRG…SSPA, LAPS…RLQT, and VYPE…SWAS. A compositionally biased stretch (acidic residues) spans 784 to 796; it reads KEGEDEGTEEEEL. Composition is skewed to polar residues over residues 905–917 and 957–972; these read CVSQ…RLQT and DSPT…QAPT. Over residues 1028-1043 the composition is skewed to acidic residues; sequence DLEEPAEGDEDEEEEG. Over residues 1058 to 1068 the composition is skewed to basic and acidic residues; that stretch reads PDQEQFLKQHF. The segment covering 1089–1129 has biased composition (polar residues); that stretch reads SQSISSRFLLQVQTSPLREPSLSSSGLALTSRPDQVSQVSG. Ser-1193 carries the phosphoserine modification. Disordered stretches follow at residues 1217–1238 and 1369–1391; these read QGSL…SYQN and QGPE…SSRP.

As to quaternary structure, can form homodimers (via C-terminus). Interacts (via C-terminus) with WDR62 (via C-terminus). Interacts with MAPK9. Interacts (via N-terminus) with NOD2; the interaction is enhanced in presence of muramyl dipeptide (MDP). Interacts with MAPK10. As to expression, ubiquitously expressed. Highest expression observed in brain.

Its subcellular location is the cytoplasm. The protein resides in the nucleus. It localises to the cytoskeleton. It is found in the spindle pole. In terms of biological role, negative regulator of NOD2 function. It down-regulates NOD2-induced processes such as activation of NF-kappa-B signaling, IL8 secretion and antibacterial response. Involved in JNK signaling pathway. The polypeptide is Mitogen-activated protein kinase-binding protein 1 (Mapkbp1) (Mus musculus (Mouse)).